We begin with the raw amino-acid sequence, 154 residues long: Deoxyuridine 5'-triphosphate nucleotidohydrolase (154 aa).

Substrate-binding positions include 74–76, Asn87, 91–93, and Lys101; these read RSG and TID.

This sequence belongs to the dUTPase family. Mg(2+) serves as cofactor.

The enzyme catalyses dUTP + H2O = dUMP + diphosphate + H(+). It functions in the pathway pyrimidine metabolism; dUMP biosynthesis; dUMP from dCTP (dUTP route): step 2/2. Its function is as follows. This enzyme is involved in nucleotide metabolism: it produces dUMP, the immediate precursor of thymidine nucleotides and it decreases the intracellular concentration of dUTP so that uracil cannot be incorporated into DNA. The protein is Deoxyuridine 5'-triphosphate nucleotidohydrolase of Cytophaga hutchinsonii (strain ATCC 33406 / DSM 1761 / CIP 103989 / NBRC 15051 / NCIMB 9469 / D465).